The sequence spans 258 residues: Type III pantothenate kinase (258 aa).

An ATP-binding site is contributed by 6–13; that stretch reads DIGNTNTV. Residues tyrosine 100 and 107–110 each bind substrate; that span reads GADR. The active-site Proton acceptor is the aspartate 109. Aspartate 129 is a binding site for K(+). Threonine 132 contacts ATP. Substrate is bound at residue threonine 185.

It belongs to the type III pantothenate kinase family. In terms of assembly, homodimer. Requires NH4(+) as cofactor. K(+) is required as a cofactor.

It localises to the cytoplasm. It carries out the reaction (R)-pantothenate + ATP = (R)-4'-phosphopantothenate + ADP + H(+). It participates in cofactor biosynthesis; coenzyme A biosynthesis; CoA from (R)-pantothenate: step 1/5. Its function is as follows. Catalyzes the phosphorylation of pantothenate (Pan), the first step in CoA biosynthesis. The polypeptide is Type III pantothenate kinase (Syntrophobacter fumaroxidans (strain DSM 10017 / MPOB)).